A 545-amino-acid polypeptide reads, in one-letter code: MSRQSLTKAHAKITELSWEPTFATPATRFGTDYTFEKAPKKDPLKQIMRSYFPMEEEKDNRVYGAMDGAIRGNMFRQVQERWLEWQKLFLSIIPFPEISAARAMPMAIDAVPNPEIHNGLAVQMIDEVRHSTIQMNLKKLYMNNYIDPAGFDITEKAFANNYAGTIGRQFGEGFITGDAITAANIYLTVVAETAFTNTLFVAMPDEAAANGDYLLPTVFHSVQSDESRHISNGYSILLMALADERNRPLLERDLRYAWWNNHCVVDAAIGTFIEYGTKDRRKDRESYAEMWRRWIYDDYYRSYLLPLEKYGLTIPHDLVEEAWNRIVDKHYVHEVARFFATGWPVNYWRIDAMTDTDFEWFEEKYPGWYNKFGKWWENYNRLAYPGKNKPIAFEDVDYEYPHRCWTCMVPCLIREDMVTDKVDGQWRTYCSETCAWTDKVAFRPEYEGRPTPNMGRLTGFREWETLHHGKDLADIITDLGYVRDDGKTLIPQPHLDLDPKKMWTLDDVRGIPFGSPNVALNEMSDDEREAHIAAYMANKNGAVTV.

Positions 97, 127, 130, 192, 226, and 229 each coordinate Fe cation.

This sequence belongs to the TmoA/XamoA family. The propane 2-monooxygenase multicomponent enzyme system is composed of an electron transfer component and a monooxygenase component interacting with the effector protein PrmD. The electron transfer component is composed of a reductase (PrmB), and the monooxygenase component is formed by a large subunit (PrmA) and a small subunit (PrmC). Probably requires the presence of the chaperonin-like protein PrmG to ensure a productive folding, resulting of a soluble PrmA, which leads to the active form of PrmABCD. The cofactor is Fe(2+).

The catalysed reaction is propane + NADH + O2 + H(+) = propan-2-ol + NAD(+) + H2O. It carries out the reaction phenol + NADH + O2 + H(+) = hydroquinone + NAD(+) + H2O. In terms of biological role, component of the propane 2-monooxygenase multicomponent enzyme system which is involved in the degradation of propane via the O2-dependent hydroxylation of propane. Under acetone induction, also able to catalyze the oxidation of phenol to yield hydroquinone. The polypeptide is Propane 2-monooxygenase, hydroxylase component large subunit (Gordonia sp. (strain TY-5)).